Here is a 319-residue protein sequence, read N- to C-terminus: Protein sprouty homolog 1 (319 aa).

M1 carries the post-translational modification N-acetylmethionine. Disordered regions lie at residues 54-78 (TEGPSVVKRPAPRTAPRQEKHERTH) and 100-160 (AVLP…QPKQ). The segment covering 69 to 78 (PRQEKHERTH) has biased composition (basic and acidic residues). Positions 112–131 (SRSTSTGSAASSGSNSSASS) are enriched in low complexity. The 113-residue stretch at 183 to 295 (QCGKCKCGEC…CYDWIHRPGC (113 aa)) folds into the SPR domain.

It belongs to the sprouty family. As to quaternary structure, forms heterodimers with SPRY2. Interacts with TESK1. Interacts with CAV1 (via C-terminus).

The protein resides in the cytoplasm. Its subcellular location is the membrane. In terms of biological role, inhibits fibroblast growth factor (FGF)-induced retinal lens fiber differentiation, probably by inhibiting FGF-mediated phosphorylation of ERK1/2. Inhibits TGFB-induced epithelial-to-mesenchymal transition in lens epithelial cells. The chain is Protein sprouty homolog 1 (SPRY1) from Homo sapiens (Human).